A 693-amino-acid polypeptide reads, in one-letter code: Golgin subfamily A member 6D (693 aa).

The stretch at 14–611 (LEESRQNKLA…KLLELQELVL (598 aa)) forms a coiled coil. Disordered stretches follow at residues 20 to 70 (NKLA…GDSQ), 497 to 547 (LPGE…GTEQ), and 662 to 693 (VEPA…MQDT). Basic and acidic residues predominate over residues 537-547 (LPKEKADGTEQ). Residues 674 to 693 (PHNNPTVQQIVQLSPVMQDT) are compositionally biased toward polar residues.

It belongs to the GOLGA6 family.

This chain is Golgin subfamily A member 6D (GOLGA6D), found in Homo sapiens (Human).